Reading from the N-terminus, the 892-residue chain is Phenylalanine--tRNA ligase beta subunit (892 aa).

Residues 39 to 150 form the tRNA-binding domain; sequence NPGVEGVVVG…PGLEPGMDVA (112 aa). A B5 domain is found at 406–569; sequence AVPPVILLRT…RCEGYDAIPL (164 aa). The interval 442 to 518 is insert; it reads VLTPADLAAD…ALLGGGESDG (77 aa). Positions 547, 553, 556, and 557 each coordinate Mg(2+). Residues 799 to 891 enclose the FDX-ACB domain; that stretch reads PRFPAVTRDV…ALKALGAELR (93 aa).

The protein belongs to the phenylalanyl-tRNA synthetase beta subunit family. Type 1 subfamily. Tetramer of two alpha and two beta subunits. It depends on Mg(2+) as a cofactor.

The protein resides in the cytoplasm. The catalysed reaction is tRNA(Phe) + L-phenylalanine + ATP = L-phenylalanyl-tRNA(Phe) + AMP + diphosphate + H(+). This chain is Phenylalanine--tRNA ligase beta subunit, found in Symbiobacterium thermophilum (strain DSM 24528 / JCM 14929 / IAM 14863 / T).